The sequence spans 61 residues: Opistoporin-4 (61 aa).

Positions 45–61 are excised as a propeptide; that stretch reads EAGQMPFDEFMDILHYY.

The protein belongs to the non-disulfide-bridged peptide (NDBP) superfamily. Long chain multifunctional peptide (group 2) family. In terms of tissue distribution, expressed by the venom gland.

It is found in the secreted. The protein localises to the target cell membrane. Its function is as follows. At high concentrations, acts as a pore former in cellular membranes and causes the leakage of the cells. At submicromolar concentrations, degranulates granulocytes and has a weak hemolytic activity against human erythrocytes. Also strongly inhibits the production of superoxide anions. Has a strong antibacterial activity against Gram-negative bacteria but is less active against Gram-positive bacteria. Also has antifungal activity. The polypeptide is Opistoporin-4 (Opistophthalmus carinatus (African yellow leg scorpion)).